A 319-amino-acid polypeptide reads, in one-letter code: uncharacterized protein (319 aa).

An MPN domain is found at 29 to 164 (VNISSLALLK…LDAFRSVNPL (136 aa)). Positions 111, 113, and 124 each coordinate Zn(2+). Residues 111-124 (HSHPGFGCWLSSVD) carry the JAMM motif motif.

Belongs to the peptidase M67A family.

This is an uncharacterized protein from Caenorhabditis elegans.